A 304-amino-acid chain; its full sequence is N-acetylmuramic acid 6-phosphate etherase (304 aa).

In terms of domain architecture, SIS spans 58 to 221; sequence IAERIHRGGR…STGVMIKLGK (164 aa). Catalysis depends on glutamate 86, which acts as the Proton donor. Glutamate 117 is an active-site residue.

This sequence belongs to the GCKR-like family. MurNAc-6-P etherase subfamily. Homodimer.

The catalysed reaction is N-acetyl-D-muramate 6-phosphate + H2O = N-acetyl-D-glucosamine 6-phosphate + (R)-lactate. Its pathway is amino-sugar metabolism; N-acetylmuramate degradation. Functionally, specifically catalyzes the cleavage of the D-lactyl ether substituent of MurNAc 6-phosphate, producing GlcNAc 6-phosphate and D-lactate. The sequence is that of N-acetylmuramic acid 6-phosphate etherase from Clostridium beijerinckii (strain ATCC 51743 / NCIMB 8052) (Clostridium acetobutylicum).